Consider the following 1450-residue polypeptide: DNA-directed RNA polymerase RPB1 homolog (1450 aa).

Belongs to the RNA polymerase beta' chain family. Part of the viral DNA-directed RNA polymerase that consists of 8 polII-like subunits (RPB1, RPB2, RPB3, RPB5, RPB6, RPB7, RPB9, RPB10), a capping enzyme and a termination factor.

It localises to the virion. It carries out the reaction RNA(n) + a ribonucleoside 5'-triphosphate = RNA(n+1) + diphosphate. Functionally, catalytic component of the DNA-directed RNA polymerase (RNAP) that catalyzes the transcription in the cytoplasm of viral DNA into RNA using the four ribonucleoside triphosphates as substrates. Forms the polymerase active center together with RPB2. Part of the core element with the central large cleft, the clamp element that moves to open and close the cleft and the jaws that are thought to grab the incoming DNA template. In African swine fever virus (isolate Pig/Kenya/KEN-50/1950) (ASFV), this protein is DNA-directed RNA polymerase RPB1 homolog.